Here is a 502-residue protein sequence, read N- to C-terminus: Polyadenylate-binding protein, cytoplasmic and nuclear (502 aa).

RRM domains are found at residues 14 to 90 (LTIY…KKDE), 96 to 176 (GNIF…LYNP), 191 to 275 (TNCF…KGQR), and 299 to 376 (KNLY…YFKN).

This sequence belongs to the polyadenylate-binding protein type-1 family.

It localises to the cytoplasm. The protein localises to the nucleus. Binds the poly(A) tail of mRNA. Appears to be an important mediator of the multiple roles of the poly(A) tail in mRNA biogenesis, stability and translation. This Encephalitozoon cuniculi (strain GB-M1) (Microsporidian parasite) protein is Polyadenylate-binding protein, cytoplasmic and nuclear (PAB1).